Here is a 254-residue protein sequence, read N- to C-terminus: Triosephosphate isomerase 2 (254 aa).

9 to 11 (NMK) lines the substrate pocket. H96 (electrophile) is an active-site residue. E168 acts as the Proton acceptor in catalysis. Residues G174 and S212 each contribute to the substrate site.

Belongs to the triosephosphate isomerase family. Homodimer.

Its subcellular location is the cytoplasm. It carries out the reaction D-glyceraldehyde 3-phosphate = dihydroxyacetone phosphate. The protein operates within polyol metabolism; glycerol degradation. In terms of biological role, involved in the glycerol metabolism. Catalyzes stereospecifically the conversion of dihydroxyacetone phosphate (DHAP) to D-glyceraldehyde-3-phosphate (G3P). The protein is Triosephosphate isomerase 2 of Listeria innocua serovar 6a (strain ATCC BAA-680 / CLIP 11262).